We begin with the raw amino-acid sequence, 365 residues long: Forkhead box protein E4 (365 aa).

Residues 1–13 (MDSPDSVRVKCES) are compositionally biased toward basic and acidic residues. The tract at residues 1–46 (MDSPDSVRVKCESKGSCSPEEGLNNGLPEEHNQASGGRRRKRPVQR) is disordered. Positions 48 to 142 (KPPYSYIALI…DNGSFLRRRK (95 aa)) form a DNA-binding region, fork-head.

In terms of tissue distribution, first expressed at the end of gastrulation (stage 13) in the anterior ectodermal placode. During intermediate neural plate stages (stages 14-16), expression expands to the presumptive nasal ectoderm (PNE) and the presumptive lens ectoderm (PLE). By stages 18-21, expression begins to deplete in the PNE, while intensifying in the PLE so that by late neural stages (stages 22), expression is restricted to the PLE. Throughout tailbud stages (stage 23-31), expression is maintained in the lens placode and lens vesicle. In the maturing lens (stage 32-onwards), expression is restricted to the anterior lens epithelium, where it remains during the tadpole stage. In tadpoles there is additional expression in the ventral midline of the pharynx. Expression continues in the adult eye.

The protein localises to the nucleus. Its function is as follows. Probable transcription factor. Mediates lens formation in the embryo by promoting the proliferation of the specified lens ectoderm and suppressing its terminal differentiation. In Xenopus laevis (African clawed frog), this protein is Forkhead box protein E4.